The primary structure comprises 236 residues: Ribose-5-phosphate isomerase A (236 aa).

Substrate is bound by residues 33 to 36 (TGST), 90 to 93 (DGAD), and 103 to 106 (KGGG). Glu112 acts as the Proton acceptor in catalysis. Lys130 serves as a coordination point for substrate.

The protein belongs to the ribose 5-phosphate isomerase family. In terms of assembly, homodimer.

The catalysed reaction is aldehydo-D-ribose 5-phosphate = D-ribulose 5-phosphate. It participates in carbohydrate degradation; pentose phosphate pathway; D-ribose 5-phosphate from D-ribulose 5-phosphate (non-oxidative stage): step 1/1. Its function is as follows. Catalyzes the reversible conversion of ribose-5-phosphate to ribulose 5-phosphate. In Trichormus variabilis (strain ATCC 29413 / PCC 7937) (Anabaena variabilis), this protein is Ribose-5-phosphate isomerase A.